We begin with the raw amino-acid sequence, 420 residues long: D-tagatose-1,6-bisphosphate aldolase subunit GatZ (420 aa).

The protein belongs to the GatZ/KbaZ family. GatZ subfamily. In terms of assembly, forms a complex with GatY.

The protein operates within carbohydrate metabolism; D-tagatose 6-phosphate degradation; D-glyceraldehyde 3-phosphate and glycerone phosphate from D-tagatose 6-phosphate: step 2/2. Component of the tagatose-1,6-bisphosphate aldolase GatYZ that is required for full activity and stability of the Y subunit. Could have a chaperone-like function for the proper and stable folding of GatY. When expressed alone, GatZ does not show any aldolase activity. Is involved in the catabolism of galactitol. This Escherichia coli O17:K52:H18 (strain UMN026 / ExPEC) protein is D-tagatose-1,6-bisphosphate aldolase subunit GatZ.